The chain runs to 214 residues: Type 4 apparatus protein DotN (214 aa).

Positions 52, 55, 84, and 87 each coordinate Zn(2+).

In terms of assembly, the T4BSS is a complex nanomachine composed of several subcomplexes. This subunit is part of the Type IV Coupling Complex (T4CC), a subcomplex composed of the DotLMNYZ core and the IcmSW-LvgA adapter subunits, linked by the C-terminal tail of DotL. Six DotLMNYZ hetero-pentameric units may assemble into a hexameric nanomachine, forming an inner membrane channel for effectors to pass through. Interacts directly with DotL. Interacts with DotZ.

It is found in the cytoplasm. Component of the Dot/Icm type IVB secretion system (T4BSS), which is used to inject bacterial effector proteins into eukaryotic host cells. Part of a subcomplex which recruits effector proteins and delivers them to the core transmembrane subcomplex. The sequence is that of Type 4 apparatus protein DotN from Legionella pneumophila subsp. pneumophila (strain Philadelphia 1 / ATCC 33152 / DSM 7513).